The chain runs to 212 residues: Ribosome biogenesis protein RLP7 (212 aa).

It belongs to the universal ribosomal protein uL30 family.

The protein localises to the nucleus. It is found in the nucleolus. Functionally, involved in the biogenesis of the 60S ribosomal subunit. May act as a specificity factor that binds precursor rRNAs and tethers the enzymes that carry out the early 5' to 3' exonucleolytic reactions that generate the mature rRNAs. The chain is Ribosome biogenesis protein RLP7 (RLP7) from Cyberlindnera jadinii (Torula yeast).